The primary structure comprises 191 residues: Zinc finger protein GIS2 (191 aa).

The segment at Phe-55–His-77 adopts a C2H2-type zinc-finger fold.

Expressed in inflorescence meristems, floral meristems and stem epidermis.

The protein resides in the nucleus. Probable transcription factor required for the initiation of inflorescence trichomes in response to gibberellin and cytokinin. Is not involved in the regulation of trichome branching. Is functionally equivalent to ZFP8. The chain is Zinc finger protein GIS2 (GIS2) from Arabidopsis thaliana (Mouse-ear cress).